Here is an 87-residue protein sequence, read N- to C-terminus: DNA-directed RNA polymerase subunit omega (87 aa).

The protein belongs to the RNA polymerase subunit omega family. As to quaternary structure, the RNAP catalytic core consists of 2 alpha, 1 beta, 1 beta' and 1 omega subunit. When a sigma factor is associated with the core the holoenzyme is formed, which can initiate transcription.

It catalyses the reaction RNA(n) + a ribonucleoside 5'-triphosphate = RNA(n+1) + diphosphate. In terms of biological role, promotes RNA polymerase assembly. Latches the N- and C-terminal regions of the beta' subunit thereby facilitating its interaction with the beta and alpha subunits. The sequence is that of DNA-directed RNA polymerase subunit omega from Pseudomonas putida (strain W619).